The following is a 393-amino-acid chain: Putative mitogen-activated protein kinase kinase kinase 7-like (393 aa).

The Protein kinase domain maps to 11 to 266 (KLSEKFLGAG…PSMKEIEKFL (256 aa)). ATP is bound by residues 17–25 (LGAGSGGAV) and lysine 38. Aspartate 133 functions as the Proton acceptor in the catalytic mechanism. The disordered stretch occupies residues 339–379 (AAADGDREVRRAEKDTERETSRAAHNGERETRRAGQDVGRE).

The protein belongs to the protein kinase superfamily. STE Ser/Thr protein kinase family. MAP kinase kinase kinase subfamily. Mg(2+) is required as a cofactor.

It carries out the reaction L-seryl-[protein] + ATP = O-phospho-L-seryl-[protein] + ADP + H(+). The enzyme catalyses L-threonyl-[protein] + ATP = O-phospho-L-threonyl-[protein] + ADP + H(+). The chain is Putative mitogen-activated protein kinase kinase kinase 7-like (Takl1) from Drosophila melanogaster (Fruit fly).